The primary structure comprises 283 residues: Para-Rep C7 (283 aa).

Residues 3–96 (SIRATHWCFT…IAGPWEYGTW (94 aa)) enclose the CRESS-DNA virus Rep endonuclease domain. Residues 10 to 13 (CFTL) carry the RCR-1 motif. Positions 36 and 42 each coordinate a divalent metal cation. The RCR-2 signature appears at 42–44 (HLQ). The Nuclear localization signal signature appears at 51 to 71 (KHVTLKKMKELLPGAHLEMAK). Y79 serves as the catalytic For DNA cleavage activity. The RCR-3 signature appears at 79-82 (YCQK). An a divalent metal cation-binding site is contributed by E84. A Nuclear localization signal motif is present at residues 96–102 (WISSGSH). 178 to 180 (GKS) contacts ATP.

It belongs to the nanoviridea/circoviridae replication-associated protein family. Homooligomer (Potential). Rep binds to repeated DNA motifs (iterons). It depends on Mg(2+) as a cofactor. Mn(2+) is required as a cofactor.

The protein localises to the host nucleus. The catalysed reaction is ATP + H2O = ADP + phosphate + H(+). Functionally, initiates and terminates the replication only of its own subviral DNA molecule. The closed circular ssDNA genome is first converted to a superhelical dsDNA. Rep binds a specific hairpin at the genome origin of replication. Introduces an endonucleolytic nick within the intergenic region of the genome, thereby initiating the rolling circle replication (RCR). Following cleavage, binds covalently to the 5'-phosphate of DNA as a tyrosyl ester. The cleavage gives rise to a free 3'-OH that serves as a primer for the cellular DNA polymerase. The polymerase synthesizes the (+) strand DNA by rolling circle mechanism. After one round of replication, a Rep-catalyzed nucleotidyl transfer reaction releases a circular single-stranded virus genome, thereby terminating the replication. Displays origin-specific DNA cleavage, nucleotidyl transferase, ATPase and helicase activities. The protein is Para-Rep C7 (C7) of Faba bean necrotic yellows C7 alphasatellite (FBNYC7A).